A 616-amino-acid polypeptide reads, in one-letter code: Mitochondrial Rho GTPase 2 (616 aa).

Topologically, residues 1–590 (MKRDVRILLL…HDTELSTASF (590 aa)) are cytoplasmic. The 167-residue stretch at 2–168 (KRDVRILLLG…FYYAQKAVLH (167 aa)) folds into the Miro 1 domain. Residues G16, K17, T18, and S19 each coordinate GTP. Residue T18 participates in Mg(2+) binding. D57 contributes to the Mg(2+) binding site. GTP-binding residues include S59, N118, K119, D121, A149, and K150. EF-hand domains lie at 184–219 (QCKK…CFGN) and 304–339 (FGYQ…FPYT). Ca(2+) contacts are provided by D199, N201, E208, D317, D319, D321, and E328. The 162-residue stretch at 416 to 577 (RNVFLCRVIG…YSKLATAAAF (162 aa)) folds into the Miro 2 domain. Residues G428, G430, K431, S432, and A433 each coordinate GTP. Position 432 (S432) interacts with Mg(2+). Residue E474 participates in Mg(2+) binding. GTP-binding residues include K528, D530, and C559. A helical; Anchor for type IV membrane protein transmembrane segment spans residues 591–613 (WLRVALGATVAAVVGFTLYKALL). The Mitochondrial intermembrane segment spans residues 614–616 (RSK).

It belongs to the mitochondrial Rho GTPase family. As to quaternary structure, homodimer.

It is found in the mitochondrion outer membrane. The catalysed reaction is GTP + H2O = GDP + phosphate + H(+). It carries out the reaction ATP + H2O = ADP + phosphate + H(+). The enzyme catalyses UTP + H2O = UDP + phosphate + H(+). Functionally, atypical mitochondrial nucleoside-triphosphatase (NTPase) involved in mitochondrial trafficking. Probably involved in control of anterograde transport of mitochondria and their subcellular distribution. Can hydrolyze GTP, ATP and UTP. The polypeptide is Mitochondrial Rho GTPase 2 (rhot2) (Xenopus tropicalis (Western clawed frog)).